The chain runs to 144 residues: Small ribosomal subunit protein eS12y (144 aa).

At serine 2 the chain carries N-acetylserine.

Belongs to the eukaryotic ribosomal protein eS12 family.

In Arabidopsis thaliana (Mouse-ear cress), this protein is Small ribosomal subunit protein eS12y (RPS12C).